A 49-amino-acid polypeptide reads, in one-letter code: Large ribosomal subunit protein eL40 (49 aa).

This sequence belongs to the eukaryotic ribosomal protein eL40 family.

This chain is Large ribosomal subunit protein eL40, found in Natronomonas pharaonis (strain ATCC 35678 / DSM 2160 / CIP 103997 / JCM 8858 / NBRC 14720 / NCIMB 2260 / Gabara) (Halobacterium pharaonis).